A 292-amino-acid chain; its full sequence is 4-hydroxy-tetrahydrodipicolinate synthase (292 aa).

A pyruvate-binding site is contributed by Thr-45. Tyr-133 (proton donor/acceptor) is an active-site residue. The active-site Schiff-base intermediate with substrate is the Lys-161. Residue Ile-203 coordinates pyruvate.

It belongs to the DapA family. As to quaternary structure, homodimer.

It is found in the cytoplasm. The enzyme catalyses L-aspartate 4-semialdehyde + pyruvate = (2S,4S)-4-hydroxy-2,3,4,5-tetrahydrodipicolinate + H2O + H(+). It participates in amino-acid biosynthesis; L-lysine biosynthesis via DAP pathway; (S)-tetrahydrodipicolinate from L-aspartate: step 3/4. Its function is as follows. Catalyzes the condensation of (S)-aspartate-beta-semialdehyde [(S)-ASA] and pyruvate to 4-hydroxy-tetrahydrodipicolinate (HTPA). This chain is 4-hydroxy-tetrahydrodipicolinate synthase, found in Pseudomonas savastanoi pv. phaseolicola (strain 1448A / Race 6) (Pseudomonas syringae pv. phaseolicola (strain 1448A / Race 6)).